A 95-amino-acid chain; its full sequence is Alpha-defensin 20 (95 aa).

Positions 1–19 (MKTLVLLSALVLLAFQVQA) are cleaved as a signal peptide. Residues 20–58 (DPIQNTDEETNTEEQPGEEDQAVSVSFGDPEGSALHEKS) constitute a propeptide that is removed on maturation. Residues 22–57 (IQNTDEETNTEEQPGEEDQAVSVSFGDPEGSALHEK) are disordered. Residues 25–40 (TDEETNTEEQPGEEDQ) show a composition bias toward acidic residues. Cystine bridges form between C64–C89, C66–C81, and C71–C88.

The protein belongs to the alpha-defensin family.

It localises to the secreted. May have microbicidal activities. In Mus musculus (Mouse), this protein is Alpha-defensin 20 (Defa20).